The chain runs to 122 residues: Small ribosomal subunit protein bS6 (122 aa).

This sequence belongs to the bacterial ribosomal protein bS6 family.

Binds together with bS18 to 16S ribosomal RNA. The chain is Small ribosomal subunit protein bS6 from Neisseria gonorrhoeae (strain ATCC 700825 / FA 1090).